Here is a 689-residue protein sequence, read N- to C-terminus: tRNA 5-methylaminomethyl-2-thiouridine biosynthesis bifunctional protein MnmC (689 aa).

The interval 1–245 (MNQRPIQTAT…KREMLTGTLP (245 aa)) is tRNA (mnm(5)s(2)U34)-methyltransferase. Positions 270–689 (IGGGIVSALT…RSPATQESSR (420 aa)) are FAD-dependent cmnm(5)s(2)U34 oxidoreductase.

In the N-terminal section; belongs to the methyltransferase superfamily. tRNA (mnm(5)s(2)U34)-methyltransferase family. It in the C-terminal section; belongs to the DAO family. It depends on FAD as a cofactor.

The protein resides in the cytoplasm. It carries out the reaction 5-aminomethyl-2-thiouridine(34) in tRNA + S-adenosyl-L-methionine = 5-methylaminomethyl-2-thiouridine(34) in tRNA + S-adenosyl-L-homocysteine + H(+). Functionally, catalyzes the last two steps in the biosynthesis of 5-methylaminomethyl-2-thiouridine (mnm(5)s(2)U) at the wobble position (U34) in tRNA. Catalyzes the FAD-dependent demodification of cmnm(5)s(2)U34 to nm(5)s(2)U34, followed by the transfer of a methyl group from S-adenosyl-L-methionine to nm(5)s(2)U34, to form mnm(5)s(2)U34. The polypeptide is tRNA 5-methylaminomethyl-2-thiouridine biosynthesis bifunctional protein MnmC (Yersinia pseudotuberculosis serotype I (strain IP32953)).